The chain runs to 328 residues: Phenylalanine--tRNA ligase alpha subunit (328 aa).

Glu-253 contributes to the Mg(2+) binding site.

Belongs to the class-II aminoacyl-tRNA synthetase family. Phe-tRNA synthetase alpha subunit type 1 subfamily. As to quaternary structure, tetramer of two alpha and two beta subunits. It depends on Mg(2+) as a cofactor.

The protein resides in the cytoplasm. It carries out the reaction tRNA(Phe) + L-phenylalanine + ATP = L-phenylalanyl-tRNA(Phe) + AMP + diphosphate + H(+). The chain is Phenylalanine--tRNA ligase alpha subunit from Chromobacterium violaceum (strain ATCC 12472 / DSM 30191 / JCM 1249 / CCUG 213 / NBRC 12614 / NCIMB 9131 / NCTC 9757 / MK).